A 278-amino-acid chain; its full sequence is Putative cuticle collagen 91 (278 aa).

2 disordered regions span residues 84–109 (LAKN…GVDG) and 140–278 (GPAG…SVRQ). Over residues 89 to 98 (PPGPPGPPGA) the composition is skewed to pro residues. Triple-helical region stretches follow at residues 91-120 (GPPG…DGVA), 137-199 (GEAG…NGQR), and 202-264 (GTPG…PGPD). The span at 99-109 (PGAAGEPGVDG) shows a compositional bias: low complexity. Residues 158-167 (GADGQGGAPG) are compositionally biased toward gly residues. Composition is skewed to low complexity over residues 172–228 (EGPA…AGAP) and 236–245 (APGVDGQPGA).

Belongs to the cuticular collagen family. In terms of assembly, collagen polypeptide chains are complexed within the cuticle by disulfide bonds and other types of covalent cross-links.

Its function is as follows. Nematode cuticles are composed largely of collagen-like proteins. The cuticle functions both as an exoskeleton and as a barrier to protect the worm from its environment. The sequence is that of Putative cuticle collagen 91 (col-91) from Caenorhabditis elegans.